We begin with the raw amino-acid sequence, 390 residues long: MDSIMEPYVADLLADDITASMVELLSGDGGAAQMDVGVLDAYLRAIGALPAHPAAPGADLAAAAEVESMASNDDTNGNWDTKVDAKVPSAFLPPPPGFPPLPVPALADEPVYAAPVDEGDAIRAFMQQLEWSEQYNGDDDAPAPDDSMASRPQLCAPYDDDIDANLRAMEKDAAERPSPDYLDTVHNGQISAASRASLVAWMGRLTHRYELAAGTLHRAVSYFDRFLSARALPSYTEHQLSLVGATAVYTAAKYEDQGTVFKLDAREIASYGEFASAQEVLAMEREMMAALGYRLGGPNAETFVEHFTRYSKGKEELRVQRLARHIADRSLESYGCLGYLPSVVAAAVISIARWTLNPPGALPWSSELHELTGYSSQDISSCVLTVLNTQ.

The interval 135-154 is disordered; sequence YNGDDDAPAPDDSMASRPQL.

Belongs to the cyclin family. Cyclin F subfamily.

The polypeptide is Putative cyclin-F2-1 (CycF2-1) (Oryza sativa subsp. japonica (Rice)).